A 120-amino-acid polypeptide reads, in one-letter code: Ribosomal protein eL22-like 1 (120 aa).

The protein belongs to the eukaryotic ribosomal protein eL22 family.

This is Ribosomal protein eL22-like 1 (rpl22l1) from Xenopus tropicalis (Western clawed frog).